Here is a 236-residue protein sequence, read N- to C-terminus: Proteasome subunit alpha (236 aa).

The protein belongs to the peptidase T1A family. As to quaternary structure, the 20S proteasome core is composed of 14 alpha and 14 beta subunits that assemble into four stacked heptameric rings, resulting in a barrel-shaped structure. The two inner rings, each composed of seven catalytic beta subunits, are sandwiched by two outer rings, each composed of seven alpha subunits. The catalytic chamber with the active sites is on the inside of the barrel. Has a gated structure, the ends of the cylinder being occluded by the N-termini of the alpha-subunits. Is capped by the proteasome-associated ATPase, ARC.

Its subcellular location is the cytoplasm. The protein operates within protein degradation; proteasomal Pup-dependent pathway. Its activity is regulated as follows. The formation of the proteasomal ATPase ARC-20S proteasome complex, likely via the docking of the C-termini of ARC into the intersubunit pockets in the alpha-rings, may trigger opening of the gate for substrate entry. Interconversion between the open-gate and close-gate conformations leads to a dynamic regulation of the 20S proteasome proteolysis activity. Functionally, component of the proteasome core, a large protease complex with broad specificity involved in protein degradation. The protein is Proteasome subunit alpha of Jonesia denitrificans (strain ATCC 14870 / DSM 20603 / BCRC 15368 / CIP 55.134 / JCM 11481 / NBRC 15587 / NCTC 10816 / Prevot 55134) (Listeria denitrificans).